The sequence spans 365 residues: Chorismate synthase (365 aa).

Arg-48 is an NADP(+) binding site. Residues 130–132 (RSS), 242–243 (NA), Gly-290, 305–309 (KPTSS), and Arg-331 each bind FMN.

Belongs to the chorismate synthase family. As to quaternary structure, homotetramer. Requires FMNH2 as cofactor.

The enzyme catalyses 5-O-(1-carboxyvinyl)-3-phosphoshikimate = chorismate + phosphate. The protein operates within metabolic intermediate biosynthesis; chorismate biosynthesis; chorismate from D-erythrose 4-phosphate and phosphoenolpyruvate: step 7/7. In terms of biological role, catalyzes the anti-1,4-elimination of the C-3 phosphate and the C-6 proR hydrogen from 5-enolpyruvylshikimate-3-phosphate (EPSP) to yield chorismate, which is the branch point compound that serves as the starting substrate for the three terminal pathways of aromatic amino acid biosynthesis. This reaction introduces a second double bond into the aromatic ring system. This chain is Chorismate synthase, found in Erythrobacter litoralis (strain HTCC2594).